Reading from the N-terminus, the 391-residue chain is Carbamoyl phosphate synthase small chain (391 aa).

The CPSase stretch occupies residues 1 to 189; sequence MIKSALLVLE…DLPAAKQPED (189 aa). L-glutamine-binding residues include Ser-47, Gly-241, and Gly-243. A Glutamine amidotransferase type-1 domain is found at 193–380; sequence HVVAYDYGVK…IELIEAYRAS (188 aa). Cys-269 serves as the catalytic Nucleophile. Residues Leu-270, Gln-273, Asn-311, Gly-313, and Phe-314 each contribute to the L-glutamine site. Residues His-353 and Glu-355 contribute to the active site.

Belongs to the CarA family. In terms of assembly, composed of two chains; the small (or glutamine) chain promotes the hydrolysis of glutamine to ammonia, which is used by the large (or ammonia) chain to synthesize carbamoyl phosphate. Tetramer of heterodimers (alpha,beta)4.

It catalyses the reaction hydrogencarbonate + L-glutamine + 2 ATP + H2O = carbamoyl phosphate + L-glutamate + 2 ADP + phosphate + 2 H(+). The catalysed reaction is L-glutamine + H2O = L-glutamate + NH4(+). It functions in the pathway amino-acid biosynthesis; L-arginine biosynthesis; carbamoyl phosphate from bicarbonate: step 1/1. The protein operates within pyrimidine metabolism; UMP biosynthesis via de novo pathway; (S)-dihydroorotate from bicarbonate: step 1/3. In terms of biological role, small subunit of the glutamine-dependent carbamoyl phosphate synthetase (CPSase). CPSase catalyzes the formation of carbamoyl phosphate from the ammonia moiety of glutamine, carbonate, and phosphate donated by ATP, constituting the first step of 2 biosynthetic pathways, one leading to arginine and/or urea and the other to pyrimidine nucleotides. The small subunit (glutamine amidotransferase) binds and cleaves glutamine to supply the large subunit with the substrate ammonia. The polypeptide is Carbamoyl phosphate synthase small chain (Yersinia pestis).